A 69-amino-acid chain; its full sequence is Sec-independent protein translocase protein TatA (69 aa).

The chain crosses the membrane as a helical span at residues 1–21; that stretch reads MMPGPFELIIILVIVLLLFGG.

It belongs to the TatA/E family. In terms of assembly, the Tat system comprises two distinct complexes: a TatABC complex, containing multiple copies of TatA, TatB and TatC subunits, and a separate TatA complex, containing only TatA subunits. Substrates initially bind to the TatABC complex, which probably triggers association of the separate TatA complex to form the active translocon.

The protein localises to the cell inner membrane. Functionally, part of the twin-arginine translocation (Tat) system that transports large folded proteins containing a characteristic twin-arginine motif in their signal peptide across membranes. TatA could form the protein-conducting channel of the Tat system. This Vesicomyosocius okutanii subsp. Calyptogena okutanii (strain HA) protein is Sec-independent protein translocase protein TatA.